The sequence spans 244 residues: Protein crossbronx (244 aa).

One can recognise a UBC core domain in the interval 20–176; the sequence is QQEYKILAEY…VQENIKESKE (157 aa). Residues 209–244 are disordered; the sequence is AGRSKQTEPSAQQGNGGHATGLSWVKEGEFKPLSIE.

This sequence belongs to the ubiquitin-conjugating enzyme family. FTS subfamily.

This chain is Protein crossbronx (cbx), found in Drosophila sechellia (Fruit fly).